The primary structure comprises 207 residues: Large ribosomal subunit protein uL4 (207 aa).

Positions 50 to 75 (KTKTVSEVSGTTKKPFKQKGTGNARQ) are disordered.

It belongs to the universal ribosomal protein uL4 family. In terms of assembly, part of the 50S ribosomal subunit.

Functionally, one of the primary rRNA binding proteins, this protein initially binds near the 5'-end of the 23S rRNA. It is important during the early stages of 50S assembly. It makes multiple contacts with different domains of the 23S rRNA in the assembled 50S subunit and ribosome. In terms of biological role, forms part of the polypeptide exit tunnel. The sequence is that of Large ribosomal subunit protein uL4 from Rickettsia felis (strain ATCC VR-1525 / URRWXCal2) (Rickettsia azadi).